The following is a 583-amino-acid chain: Laccase-14 (583 aa).

A signal peptide spans 1–30; sequence MAPSLGSGSTRILLIVSLLLCLRQQAVVDA. Plastocyanin-like domains are found at residues 38-158 and 168-320; these read HVGN…PRPG and AEHT…YDDD. Residues asparagine 41 and asparagine 84 are each glycosylated (N-linked (GlcNAc...) asparagine). Positions 88 and 90 each coordinate Cu cation. The N-linked (GlcNAc...) asparagine glycan is linked to asparagine 126. Histidine 137 and histidine 139 together coordinate Cu cation. N-linked (GlcNAc...) asparagine glycans are attached at residues asparagine 179, asparagine 251, asparagine 304, asparagine 338, asparagine 388, asparagine 400, asparagine 446, and asparagine 464. The region spanning 426–567 is the Plastocyanin-like 3 domain; it reads DFPDRPPVMF…AMAFDVQDGP (142 aa). Cu cation is bound by residues histidine 482, histidine 485, histidine 487, histidine 546, cysteine 547, histidine 548, and histidine 552.

It belongs to the multicopper oxidase family. It depends on Cu cation as a cofactor.

It localises to the secreted. The protein resides in the extracellular space. The protein localises to the apoplast. It carries out the reaction 4 hydroquinone + O2 = 4 benzosemiquinone + 2 H2O. Functionally, lignin degradation and detoxification of lignin-derived products. In Oryza sativa subsp. japonica (Rice), this protein is Laccase-14 (LAC14).